The primary structure comprises 36 residues: Toxin Iob1 (36 aa).

3 disulfide bridges follow: Cys-6–Cys-21, Cys-13–Cys-26, and Cys-20–Cys-33.

It localises to the secreted. In terms of biological role, binds reversibly and blocks N-type voltage-gated calcium channels (Cav). This Isyndus obscurus (Assassin bug) protein is Toxin Iob1.